The primary structure comprises 249 residues: MTIKAILTDIEGTTSAVSFVFDVLFPYAARHLPDFVREHAGETEVAAQLAAVRAESGEADADVERVIAILLQWIAEDRKATPLKALQGMVWAQGYRDGQLKGHVYPDAVQALREWKARGLDLYVYSSGSIQAQKLIFGCSEAGDLGSLFSGYFDTTSGPKRESASYARIAGAIGLPAAEILFLSDVVQELDAARDAGMRTLGLAREGGSLDGHPTVASSPTSSWSERAGYPEGTLLLGSIAPWVPPSAG.

Belongs to the HAD-like hydrolase superfamily. MasA/MtnC family. As to quaternary structure, monomer. Mg(2+) serves as cofactor.

It carries out the reaction 5-methylsulfanyl-2,3-dioxopentyl phosphate + H2O = 1,2-dihydroxy-5-(methylsulfanyl)pent-1-en-3-one + phosphate. The protein operates within amino-acid biosynthesis; L-methionine biosynthesis via salvage pathway; L-methionine from S-methyl-5-thio-alpha-D-ribose 1-phosphate: step 3/6. Its pathway is amino-acid biosynthesis; L-methionine biosynthesis via salvage pathway; L-methionine from S-methyl-5-thio-alpha-D-ribose 1-phosphate: step 4/6. In terms of biological role, bifunctional enzyme that catalyzes the enolization of 2,3-diketo-5-methylthiopentyl-1-phosphate (DK-MTP-1-P) into the intermediate 2-hydroxy-3-keto-5-methylthiopentenyl-1-phosphate (HK-MTPenyl-1-P), which is then dephosphorylated to form the acireductone 1,2-dihydroxy-3-keto-5-methylthiopentene (DHK-MTPene). This chain is Enolase-phosphatase E1, found in Pseudomonas aeruginosa (strain ATCC 15692 / DSM 22644 / CIP 104116 / JCM 14847 / LMG 12228 / 1C / PRS 101 / PAO1).